The chain runs to 199 residues: dTTP/UTP pyrophosphatase (199 aa).

D73 functions as the Proton acceptor in the catalytic mechanism.

This sequence belongs to the Maf family. YhdE subfamily. Requires a divalent metal cation as cofactor.

It is found in the cytoplasm. It catalyses the reaction dTTP + H2O = dTMP + diphosphate + H(+). The catalysed reaction is UTP + H2O = UMP + diphosphate + H(+). Nucleoside triphosphate pyrophosphatase that hydrolyzes dTTP and UTP. May have a dual role in cell division arrest and in preventing the incorporation of modified nucleotides into cellular nucleic acids. This is dTTP/UTP pyrophosphatase from Caldicellulosiruptor saccharolyticus (strain ATCC 43494 / DSM 8903 / Tp8T 6331).